The chain runs to 229 residues: Demethylmenaquinone methyltransferase (229 aa).

S-adenosyl-L-methionine is bound by residues T57, D77, and 101 to 102; that span reads DV.

Belongs to the class I-like SAM-binding methyltransferase superfamily. MenG/UbiE family.

The enzyme catalyses a 2-demethylmenaquinol + S-adenosyl-L-methionine = a menaquinol + S-adenosyl-L-homocysteine + H(+). It functions in the pathway quinol/quinone metabolism; menaquinone biosynthesis; menaquinol from 1,4-dihydroxy-2-naphthoate: step 2/2. Functionally, methyltransferase required for the conversion of demethylmenaquinol (DMKH2) to menaquinol (MKH2). In Chlamydia trachomatis serovar A (strain ATCC VR-571B / DSM 19440 / HAR-13), this protein is Demethylmenaquinone methyltransferase.